Consider the following 412-residue polypeptide: Putative competence-damage inducible protein (412 aa).

This sequence belongs to the CinA family.

This is Putative competence-damage inducible protein from Bacillus cereus (strain Q1).